We begin with the raw amino-acid sequence, 287 residues long: Prepilin leader peptidase/N-methyltransferase (287 aa).

Helical transmembrane passes span 10–30 (LGFP…NVVI), 101–121 (ISIQ…ASVW), 125–145 (FGWQ…MSGI), 177–197 (KPAL…WWLF), 226–246 (ILPI…IWLF), and 253–273 (ATPI…FFWG).

This sequence belongs to the peptidase A24 family.

Its subcellular location is the cell inner membrane. The enzyme catalyses Typically cleaves a -Gly-|-Phe- bond to release an N-terminal, basic peptide of 5-8 residues from type IV prepilin, and then N-methylates the new N-terminal amino group, the methyl donor being S-adenosyl-L-methionine.. In terms of biological role, plays an essential role in type IV pili and type II pseudopili formation by proteolytically removing the leader sequence from substrate proteins and subsequently monomethylating the alpha-amino group of the newly exposed N-terminal phenylalanine. The sequence is that of Prepilin leader peptidase/N-methyltransferase (xpsO) from Xanthomonas campestris pv. campestris (strain ATCC 33913 / DSM 3586 / NCPPB 528 / LMG 568 / P 25).